A 198-amino-acid polypeptide reads, in one-letter code: Thioredoxin reductase-like selenoprotein T homolog CG3887 (198 aa).

The N-terminal stretch at 1 to 25 (MERLTGRNVALLVLCLCAGYALVFA) is a signal peptide. A disulfide bond links cysteine 49 and cysteine 52.

This sequence belongs to the SelWTH family. SELT subfamily.

It catalyses the reaction [thioredoxin]-dithiol + NADP(+) = [thioredoxin]-disulfide + NADPH + H(+). Probably has thioredoxin reductase-like oxidoreductase activity. The chain is Thioredoxin reductase-like selenoprotein T homolog CG3887 from Drosophila melanogaster (Fruit fly).